Consider the following 62-residue polypeptide: uncharacterized protein (62 aa).

Positions 1-19 are cleaved as a signal peptide; sequence MKLIILLFVVAAFVTLAMG.

This is an uncharacterized protein from Lepidoptera (butterflies and moths).